Reading from the N-terminus, the 434-residue chain is Na(+)/H(+) antiporter NhaA 1 (434 aa).

11 helical membrane-spanning segments follow: residues 34-54, 73-93, 111-131, 141-161, 171-191, 194-214, 233-253, 278-298, 313-333, 346-366, and 380-400; these read GLLL…PWSA, LTLG…VAGL, ALPV…YVLW, GWAI…AVIS, FLLT…ALFY, ELHL…ALLV, VLVH…GFAV, SAGL…VGGF, VVTG…WLLA, WVDV…SLLI, and HVKV…TGVL.

Belongs to the NhaA Na(+)/H(+) (TC 2.A.33) antiporter family.

It is found in the cell membrane. It carries out the reaction Na(+)(in) + 2 H(+)(out) = Na(+)(out) + 2 H(+)(in). Na(+)/H(+) antiporter that extrudes sodium in exchange for external protons. In Nocardioides sp. (strain ATCC BAA-499 / JS614), this protein is Na(+)/H(+) antiporter NhaA 1.